A 347-amino-acid chain; its full sequence is Phosphate acyltransferase (347 aa).

This sequence belongs to the PlsX family. As to quaternary structure, homodimer. Probably interacts with PlsY.

The protein localises to the cytoplasm. The catalysed reaction is a fatty acyl-[ACP] + phosphate = an acyl phosphate + holo-[ACP]. Its pathway is lipid metabolism; phospholipid metabolism. Functionally, catalyzes the reversible formation of acyl-phosphate (acyl-PO(4)) from acyl-[acyl-carrier-protein] (acyl-ACP). This enzyme utilizes acyl-ACP as fatty acyl donor, but not acyl-CoA. The sequence is that of Phosphate acyltransferase from Dehalococcoides mccartyi (strain ATCC BAA-2100 / JCM 16839 / KCTC 5957 / BAV1).